A 292-amino-acid polypeptide reads, in one-letter code: 3-methyl-2-oxobutanoate hydroxymethyltransferase 2 (292 aa).

Positions 52 and 91 each coordinate Mg(2+). 3-methyl-2-oxobutanoate contacts are provided by residues 52 to 53, Asp-91, and Lys-120; that span reads DS. Glu-122 serves as a coordination point for Mg(2+). Glu-189 serves as the catalytic Proton acceptor.

Belongs to the PanB family. Homodecamer; pentamer of dimers. Mg(2+) is required as a cofactor.

The protein localises to the cytoplasm. The catalysed reaction is 3-methyl-2-oxobutanoate + (6R)-5,10-methylene-5,6,7,8-tetrahydrofolate + H2O = 2-dehydropantoate + (6S)-5,6,7,8-tetrahydrofolate. The protein operates within cofactor biosynthesis; (R)-pantothenate biosynthesis; (R)-pantoate from 3-methyl-2-oxobutanoate: step 1/2. Catalyzes the reversible reaction in which hydroxymethyl group from 5,10-methylenetetrahydrofolate is transferred onto alpha-ketoisovalerate to form ketopantoate. The chain is 3-methyl-2-oxobutanoate hydroxymethyltransferase 2 from Bradyrhizobium diazoefficiens (strain JCM 10833 / BCRC 13528 / IAM 13628 / NBRC 14792 / USDA 110).